Reading from the N-terminus, the 477-residue chain is Aspartyl/glutamyl-tRNA(Asn/Gln) amidotransferase subunit B (477 aa).

The protein belongs to the GatB/GatE family. GatB subfamily. In terms of assembly, heterotrimer of A, B and C subunits.

It carries out the reaction L-glutamyl-tRNA(Gln) + L-glutamine + ATP + H2O = L-glutaminyl-tRNA(Gln) + L-glutamate + ADP + phosphate + H(+). The catalysed reaction is L-aspartyl-tRNA(Asn) + L-glutamine + ATP + H2O = L-asparaginyl-tRNA(Asn) + L-glutamate + ADP + phosphate + 2 H(+). In terms of biological role, allows the formation of correctly charged Asn-tRNA(Asn) or Gln-tRNA(Gln) through the transamidation of misacylated Asp-tRNA(Asn) or Glu-tRNA(Gln) in organisms which lack either or both of asparaginyl-tRNA or glutaminyl-tRNA synthetases. The reaction takes place in the presence of glutamine and ATP through an activated phospho-Asp-tRNA(Asn) or phospho-Glu-tRNA(Gln). This Streptococcus sanguinis (strain SK36) protein is Aspartyl/glutamyl-tRNA(Asn/Gln) amidotransferase subunit B.